The sequence spans 98 residues: MSLVYMNIMTAFMVSLAGLLMYRSHLMSSLLCLEGMMLSLFVMATLTILNSHFTLASMMPIILLVFAACEAALGLSLLVMVSNTYGTDYVQNLNLLQC.

The next 3 membrane-spanning stretches (helical) occupy residues 1–21 (MSLV…GLLM), 29–49 (SLLC…LTIL), and 61–81 (IILL…LVMV).

Belongs to the complex I subunit 4L family. Core subunit of respiratory chain NADH dehydrogenase (Complex I) which is composed of 45 different subunits.

The protein localises to the mitochondrion inner membrane. The enzyme catalyses a ubiquinone + NADH + 5 H(+)(in) = a ubiquinol + NAD(+) + 4 H(+)(out). Core subunit of the mitochondrial membrane respiratory chain NADH dehydrogenase (Complex I) which catalyzes electron transfer from NADH through the respiratory chain, using ubiquinone as an electron acceptor. Part of the enzyme membrane arm which is embedded in the lipid bilayer and involved in proton translocation. This is NADH-ubiquinone oxidoreductase chain 4L (MT-ND4L) from Rangifer tarandus (Reindeer).